A 313-amino-acid chain; its full sequence is Putative adhesin P1-like protein MPN_202 (313 aa).

Residues 1–16 (MGSQNQGSTTTTSAGN) show a composition bias toward low complexity. The interval 1 to 44 (MGSQNQGSTTTTSAGNPDSLVTDKVDQKGQVQTSGQNLSDTNYT) is disordered. The segment covering 29-44 (GQVQTSGQNLSDTNYT) has biased composition (polar residues).

This sequence belongs to the adhesin P1 family.

The protein is Putative adhesin P1-like protein MPN_202 of Mycoplasma pneumoniae (strain ATCC 29342 / M129 / Subtype 1) (Mycoplasmoides pneumoniae).